A 797-amino-acid chain; its full sequence is Striatin-3 (797 aa).

Met-1 carries the post-translational modification N-acetylmethionine. Composition is skewed to gly residues over residues 1–13 (MDEL…GGPG) and 23–43 (GPGG…GGGP). The disordered stretch occupies residues 1-60 (MDELAGGGGGGPGMAAPPRQQQGPGGNLGLSPGGNGAAGGGGPPASEGAGPAAGPELSRP). A compositionally biased stretch (low complexity) spans 44-56 (PASEGAGPAAGPE). A caveolin-binding region spans residues 71-79 (YIQHEWARF). Residues 77–136 (ARFEMERAHWEVERAELQARIAFLQGERKGQENLKKDLVRRIKMLEYALKQERAKYHKLK) adopt a coiled-coil conformation. Thr-150 is subject to Phosphothreonine. Positions 166–183 (QNSQLTWKQGRQLLRQYL) are calmodulin-binding. Phosphoserine is present on residues Ser-202, Ser-214, and Ser-229. Disordered regions lie at residues 224–278 (LNGG…KHRM) and 313–338 (DGEG…SPTA). Basic and acidic residues predominate over residues 230–241 (PKQKGQEIKRSS). Positions 253-265 (NADDSDEDEENDM) are enriched in acidic residues. 2 positions are modified to phosphoserine: Ser-257 and Ser-335. 6 WD repeats span residues 478-517 (SHFD…PAKK), 531-570 (AHIG…VDPY), 584-623 (GHTD…PCIC), 679-718 (QSNN…MIHS), 721-760 (AHLD…CVQE), and 767-797 (KLDE…KVFV).

Belongs to the WD repeat striatin family. As to quaternary structure, tetramerizes. Part of the core of STRIPAK complexes composed of PP2A catalytic and scaffolding subunits, the striatins (PP2A regulatory subunits), the striatin-associated proteins MOB4, STRIP1 and STRIP2, PDCD10 and members of the STE20 kinases, such as STK24 and STK26. The STRIPAK complex can be extended by adapter proteins such as SLMAP:SIKE1 or CTTNBP2NL. Interacts with CDC42BPB.

Its subcellular location is the cytoplasm. It is found in the membrane. Its function is as follows. Calmodulin-binding scaffolding protein which is the center of the striatin-interacting phosphatase and kinase (STRIPAK) complexes. STRIPAK complexes have critical roles in protein (de)phosphorylation and are regulators of multiple signaling pathways including Hippo, MAPK, nuclear receptor and cytoskeleton remodeling. Different types of STRIPAK complexes are involved in a variety of biological processes such as cell growth, differentiation, apoptosis, metabolism and immune regulation. This is Striatin-3 from Homo sapiens (Human).